Here is a 166-residue protein sequence, read N- to C-terminus: Lutropin subunit beta (166 aa).

The N-terminal stretch at 1-21 (MGGAQVLLLLTLLGTPLVTHG) is a signal peptide. Disulfide bonds link Cys56–Cys104, Cys70–Cys119, Cys73–Cys157, Cys81–Cys135, Cys85–Cys137, and Cys140–Cys147. Asn60 is a glycosylation site (N-linked (GlcNAc...) asparagine).

Belongs to the glycoprotein hormones subunit beta family. As to quaternary structure, heterodimer of a common alpha chain and a unique beta chain which confers biological specificity to thyrotropin, lutropin, follitropin and gonadotropin.

Its subcellular location is the secreted. Its function is as follows. Promotes spermatogenesis and ovulation by stimulating the testes and ovaries to synthesize steroids. This is Lutropin subunit beta (LHB) from Coturnix japonica (Japanese quail).